We begin with the raw amino-acid sequence, 95 residues long: uncharacterized protein (95 aa).

The helical transmembrane segment at 12-32 (IASLVVSVVVLLIGLILWFFI) threads the bilayer.

Its subcellular location is the cell membrane. This is an uncharacterized protein from Escherichia coli O6:H1 (strain CFT073 / ATCC 700928 / UPEC).